The sequence spans 389 residues: Lipid-A-disaccharide synthase (389 aa).

This sequence belongs to the LpxB family.

It carries out the reaction a lipid X + a UDP-2-N,3-O-bis[(3R)-3-hydroxyacyl]-alpha-D-glucosamine = a lipid A disaccharide + UDP + H(+). It functions in the pathway bacterial outer membrane biogenesis; LPS lipid A biosynthesis. Its function is as follows. Condensation of UDP-2,3-diacylglucosamine and 2,3-diacylglucosamine-1-phosphate to form lipid A disaccharide, a precursor of lipid A, a phosphorylated glycolipid that anchors the lipopolysaccharide to the outer membrane of the cell. The protein is Lipid-A-disaccharide synthase of Burkholderia cenocepacia (strain ATCC BAA-245 / DSM 16553 / LMG 16656 / NCTC 13227 / J2315 / CF5610) (Burkholderia cepacia (strain J2315)).